Consider the following 871-residue polypeptide: Metabotropic glutamate receptor 6 (871 aa).

A signal peptide spans 1–23 (MGRLRVLLLWLAWWLSQAGIAHG). The Extracellular segment spans residues 24–579 (AGSVRLAGGL…VVRLTWSSPW (556 aa)). The cysteines at positions 51 and 93 are disulfide-linked. Residues serine 148, 169-171 (AST), and tyrosine 219 contribute to the L-glutamate site. Disulfide bonds link cysteine 238-cysteine 530, cysteine 361-cysteine 377, cysteine 417-cysteine 424, cysteine 512-cysteine 531, cysteine 516-cysteine 534, cysteine 537-cysteine 549, and cysteine 552-cysteine 565. A glycan (N-linked (GlcNAc...) asparagine) is linked at asparagine 290. Aspartate 301 lines the L-glutamate pocket. L-glutamate is bound at residue lysine 394. Residues asparagine 445 and asparagine 473 are each glycosylated (N-linked (GlcNAc...) asparagine). The N-linked (GlcNAc...) asparagine glycan is linked to asparagine 561. Residues 580–602 (AALPLLLAVLGIMATTTIIATFM) form a helical membrane-spanning segment. Topologically, residues 603-616 (RHNDTPIVRASGRE) are cytoplasmic. A helical membrane pass occupies residues 617–637 (LSYVLLTGIFLIYAITFLMVA). Over 638-648 (EPCAAVCASRR) the chain is Extracellular. Residues 649–667 (LLLGLGTTLSYSALLTKTN) traverse the membrane as a helical segment. Over 668–691 (RIYRIFEQGKRSVTPPPFISPTSQ) the chain is Cytoplasmic. The helical transmembrane segment at 692–712 (LVITFGLTSLQVVGVIAWLGA) threads the bilayer. The Extracellular segment spans residues 713–742 (QPPHSVIDYEEQRTVDPEQARGVLKCDMSD). Residues 743–764 (LSLIGCLGYSLLLMVTCTVYAI) form a helical membrane-spanning segment. Over 765–777 (KARGVPETFNEAK) the chain is Cytoplasmic. The helical transmembrane segment at 778 to 800 (PIGFTMYTTCIIWLAFVPIFFGT) threads the bilayer. Topologically, residues 801–813 (AQSAEKIYIQTTT) are extracellular. The helical transmembrane segment at 814 to 839 (LTVSLSLSASVSLGMLYVPKTYVILF) threads the bilayer. Over 840–871 (HPEQNVQKRKRSLKKTSTMAAPPKSENSEDAK) the chain is Cytoplasmic. The tract at residues 848-871 (RKRSLKKTSTMAAPPKSENSEDAK) is disordered.

The protein belongs to the G-protein coupled receptor 3 family. As to quaternary structure, homodimer. Interacts with GPR179. Interacts with photoreceptor synaptic protein LRIT1 (via its N-terminal extracellular domain). In terms of tissue distribution, detected in the outer plexiform layer in retina (at protein level).

It is found in the cell membrane. Its subcellular location is the endoplasmic reticulum membrane. The protein resides in the golgi apparatus membrane. The protein localises to the cell projection. It localises to the dendrite. Functionally, G-protein coupled receptor for glutamate. Ligand binding causes a conformation change that triggers signaling via guanine nucleotide-binding proteins (G proteins) and modulates the activity of down-stream effectors, such as adenylate cyclase. Signaling inhibits adenylate cyclase activity. Signaling stimulates TRPM1 channel activity and Ca(2+) uptake. Required for normal vision. This chain is Metabotropic glutamate receptor 6 (Grm6), found in Mus musculus (Mouse).